A 249-amino-acid polypeptide reads, in one-letter code: Probable phosphatase VV2_1469 (249 aa).

Residues histidine 8, histidine 10, histidine 16, histidine 41, glutamate 74, histidine 102, histidine 132, aspartate 194, and histidine 196 each contribute to the Zn(2+) site.

The protein belongs to the PHP family. Zn(2+) is required as a cofactor.

The sequence is that of Probable phosphatase VV2_1469 from Vibrio vulnificus (strain CMCP6).